Reading from the N-terminus, the 284-residue chain is 2-dehydro-3-deoxyphosphooctonate aldolase (284 aa).

Belongs to the KdsA family.

The protein localises to the cytoplasm. It catalyses the reaction D-arabinose 5-phosphate + phosphoenolpyruvate + H2O = 3-deoxy-alpha-D-manno-2-octulosonate-8-phosphate + phosphate. Its pathway is carbohydrate biosynthesis; 3-deoxy-D-manno-octulosonate biosynthesis; 3-deoxy-D-manno-octulosonate from D-ribulose 5-phosphate: step 2/3. It participates in bacterial outer membrane biogenesis; lipopolysaccharide biosynthesis. This is 2-dehydro-3-deoxyphosphooctonate aldolase from Escherichia coli O6:K15:H31 (strain 536 / UPEC).